Here is a 307-residue protein sequence, read N- to C-terminus: Protoheme IX farnesyltransferase (307 aa).

Helical transmembrane passes span 32–52, 65–85, 108–128, 131–151, 158–178, 186–206, 251–271, and 287–307; these read MGIV…ALHF, FFTI…NNYI, PGFA…FLLL, PMAV…YTLW, LNTV…WAAI, IAWM…LALA, LGIT…ALGL, and FVYS…VTFF.

Belongs to the UbiA prenyltransferase family. Protoheme IX farnesyltransferase subfamily. In terms of assembly, interacts with CtaA.

It is found in the cell membrane. It carries out the reaction heme b + (2E,6E)-farnesyl diphosphate + H2O = Fe(II)-heme o + diphosphate. The protein operates within porphyrin-containing compound metabolism; heme O biosynthesis; heme O from protoheme: step 1/1. In terms of biological role, converts heme B (protoheme IX) to heme O by substitution of the vinyl group on carbon 2 of heme B porphyrin ring with a hydroxyethyl farnesyl side group. In Bacillus mycoides (strain KBAB4) (Bacillus weihenstephanensis), this protein is Protoheme IX farnesyltransferase.